A 529-amino-acid polypeptide reads, in one-letter code: Ribonuclease Y (529 aa).

Residues 4-24 (GLIYISLEVLVACLITALIMY) traverse the membrane as a helical segment. Positions 216–297 (LTSRIALPCS…NRIEEVYHRV (82 aa)) constitute a KH domain. Positions 342–435 (ALQHSKEVAL…VCAADALSAG (94 aa)) constitute an HD domain.

This sequence belongs to the RNase Y family.

The protein localises to the cell membrane. Functionally, endoribonuclease that initiates mRNA decay. The chain is Ribonuclease Y from Helicobacter pylori (strain J99 / ATCC 700824) (Campylobacter pylori J99).